The chain runs to 218 residues: tRNA (guanine-N(7)-)-methyltransferase (218 aa).

S-adenosyl-L-methionine is bound by residues glutamate 45, glutamate 70, aspartate 97, and aspartate 119. The active site involves aspartate 119. Lysine 123 contributes to the substrate binding site. The interval 125 to 130 (RHEKRR) is interaction with RNA. Residues aspartate 155 and 195 to 198 (TEYE) contribute to the substrate site.

The protein belongs to the class I-like SAM-binding methyltransferase superfamily. TrmB family.

The catalysed reaction is guanosine(46) in tRNA + S-adenosyl-L-methionine = N(7)-methylguanosine(46) in tRNA + S-adenosyl-L-homocysteine. It functions in the pathway tRNA modification; N(7)-methylguanine-tRNA biosynthesis. Its function is as follows. Catalyzes the formation of N(7)-methylguanine at position 46 (m7G46) in tRNA. This Lactobacillus acidophilus (strain ATCC 700396 / NCK56 / N2 / NCFM) protein is tRNA (guanine-N(7)-)-methyltransferase.